The sequence spans 39 residues: Photosystem II reaction center protein J (39 aa).

The chain crosses the membrane as a helical span at residues 7–27 (IPLWVVAVIAGLGVIAVVGLF).

It belongs to the PsbJ family. As to quaternary structure, PSII is composed of 1 copy each of membrane proteins PsbA, PsbB, PsbC, PsbD, PsbE, PsbF, PsbH, PsbI, PsbJ, PsbK, PsbL, PsbM, PsbT, PsbX, PsbY, PsbZ, Psb30/Ycf12, peripheral proteins PsbO, CyanoQ (PsbQ), PsbU, PsbV and a large number of cofactors. It forms dimeric complexes.

It is found in the cellular thylakoid membrane. Its function is as follows. One of the components of the core complex of photosystem II (PSII). PSII is a light-driven water:plastoquinone oxidoreductase that uses light energy to abstract electrons from H(2)O, generating O(2) and a proton gradient subsequently used for ATP formation. It consists of a core antenna complex that captures photons, and an electron transfer chain that converts photonic excitation into a charge separation. The sequence is that of Photosystem II reaction center protein J from Gloeothece citriformis (strain PCC 7424) (Cyanothece sp. (strain PCC 7424)).